Consider the following 483-residue polypeptide: Serine/threonine-protein phosphatase 2A regulatory subunit phr2AB (483 aa).

2 WD repeats span residues 22–61 (SDANVVPAIEFDQTGDFIAVGDKGGKVLLLKRTHDKQSSK) and 88–129 (EIEE…IKQV). The interval 132-152 (SATTTGPSYNGSLASNNTRSP) is disordered. 4 WD repeats span residues 206 to 244 (AHAYHINSISLNSDGETYISSDDLRIHLWNLNINTECFN), 255 to 295 (DLTE…LCDN), 314 to 352 (EIISSISDIKFSRDGRYILSRDFLTLKLWDINMENKPVK), and 369 to 410 (ENDC…DVCL). The segment at 421–443 (TKTLTTKMKLRSSKKEPKKPEDI) is disordered. Residues 433–443 (SKKEPKKPEDI) are compositionally biased toward basic and acidic residues. The WD 7 repeat unit spans residues 449 to 483 (EYTKKTLHCAWHPKDNLIAVGAANTVYLYAATENK).

This sequence belongs to the phosphatase 2A regulatory subunit B family. In terms of assembly, PP2A consists of a trimeric holoenzyme, composed of a 37 kDa catalytic subunit (C subunit) and a 65 kDa constant regulatory subunit (A subunit), that associates with a variety of regulatory subunits (B subunit) such as phr2AB (B55) and psrA (B56 homolog). The trimer may partially dissociates into a core 'AC' dimer equally active compared to the trimer.

It localises to the cytoplasm. Its subcellular location is the cytosol. It is found in the cytoskeleton. The protein resides in the microtubule organizing center. The protein localises to the centrosome. The B regulatory subunit might modulate substrate selectivity and catalytic activity, and might also direct the localization of the catalytic enzyme to a particular subcellular compartment. This Dictyostelium discoideum (Social amoeba) protein is Serine/threonine-protein phosphatase 2A regulatory subunit phr2AB (phr2aB).